The chain runs to 446 residues: Argininosuccinate synthase (446 aa).

Residues 17 to 25 (AFSGGLDTS) and Ala-43 each bind ATP. Position 99 (Tyr-99) interacts with L-citrulline. Residues Gly-129 and Thr-131 each coordinate ATP. Residues Thr-131, Asn-135, and Asp-136 each contribute to the L-aspartate site. Position 135 (Asn-135) interacts with L-citrulline. Asp-136 lines the ATP pocket. Arg-139 and Ser-192 together coordinate L-citrulline. Asp-194 contributes to the ATP binding site. Thr-201, Glu-203, and Glu-280 together coordinate L-citrulline.

This sequence belongs to the argininosuccinate synthase family. Type 2 subfamily. In terms of assembly, homotetramer.

The protein resides in the cytoplasm. The catalysed reaction is L-citrulline + L-aspartate + ATP = 2-(N(omega)-L-arginino)succinate + AMP + diphosphate + H(+). It functions in the pathway amino-acid biosynthesis; L-arginine biosynthesis; L-arginine from L-ornithine and carbamoyl phosphate: step 2/3. In Variovorax paradoxus (strain S110), this protein is Argininosuccinate synthase.